A 1214-amino-acid chain; its full sequence is Sodium bicarbonate cotransporter 3 (1214 aa).

Over residues 1-12 the composition is skewed to basic and acidic residues; it reads MERFRLEKKLPG. 2 disordered regions span residues 1–22 and 52–93; these read MERFRLEKKLPGPDEEAVVDLG and SKES…PSQR. Topologically, residues 1-608 are extracellular; that stretch reads MERFRLEKKL…DFKDALSLQC (608 aa). Phosphoserine occurs at positions 52, 55, 84, 150, 165, and 168. Residues 55-72 are compositionally biased toward basic residues; that stretch reads SRRRHRHRGHKHHHRRRK. Over residues 73 to 85 the composition is skewed to basic and acidic residues; it reads DKESDKEDGRESP. Asparagine 171 carries N-linked (GlcNAc...) asparagine glycosylation. Residues serine 233, serine 242, serine 255, arginine 258, serine 260, threonine 263, glycine 264, and alanine 267 each carry the phosphoserine modification. Asparagine 269 is a glycosylation site (N-linked (GlcNAc...) asparagine). 3 disordered regions span residues 289–346, 362–408, and 552–572; these read SRAG…IPTV, EEQK…ENST, and FHNGSTPTLGETPKEAAHHAG. Residues 303-313 show a composition bias toward pro residues; sequence VPTPQNSPPSS. The span at 314-332 shows a compositional bias: low complexity; the sequence is PSISRLTSRSSQESQRQAP. Polar residues predominate over residues 379 to 392; that stretch reads SPQSAPGNLDNSKS. Residue serine 382 is modified to Phosphoserine. N-linked (GlcNAc...) asparagine glycosylation occurs at asparagine 398. Residues serine 400 and serine 403 each carry the phosphoserine modification. Residue asparagine 406 is glycosylated (N-linked (GlcNAc...) asparagine). Serine 407 and serine 556 each carry phosphoserine. Threonine 557 bears the Phosphothreonine mark. A compositionally biased stretch (basic and acidic residues) spans 563 to 572; the sequence is TPKEAAHHAG. The chain crosses the membrane as a helical span at residues 609-629; that stretch reads LASILFLYCACMSPVITFGGL. At 630–637 the chain is on the cytoplasmic side; sequence LGEATEGR. A helical transmembrane segment spans residues 638 to 658; that stretch reads ISAIESLFGASLTGIAYSLFA. Residues 659–695 lie on the Extracellular side of the membrane; sequence GQPLTILGSTGPVLVFEKILYKFCRDYQLSYLSLRTS. Residues 696-716 traverse the membrane as a helical segment; the sequence is IGLWTSFLCIVLVATDASSLV. Residues 717 to 725 are Cytoplasmic-facing; sequence CYITRFTEE. Residues 726-746 traverse the membrane as a helical segment; the sequence is AFAALICIIFIYEALEKLFDL. Phosphoserine is present on lysine 742. Residues 747–817 are Extracellular-facing; it reads GETYAFNMHN…VFLGSACGHH (71 aa). Residues cysteine 766 and cysteine 768 are joined by a disulfide bond. 2 positions are modified to phosphoserine: proline 771 and proline 774. N-linked (GlcNAc...) asparagine glycosylation occurs at asparagine 776. Alanine 780 bears the Phosphoserine mark. Residues asparagine 786 and asparagine 791 are each glycosylated (N-linked (GlcNAc...) asparagine). A disulfide bridge connects residues cysteine 802 and cysteine 814. A helical transmembrane segment spans residues 818–838; that stretch reads GPYIPDVLFWCVILFFTTFFL. Over 839–861 the chain is Cytoplasmic; the sequence is SSFLKQFKTKRYFPTKVRSTISD. Residues 862–882 form a helical membrane-spanning segment; it reads FAVFLTIVIMVTIDYLVGVPS. Residues 883–908 lie on the Extracellular side of the membrane; sequence PKLHVPEKFEPTHPERGWIISPLGDN. The chain crosses the membrane as a helical span at residues 909–929; sequence PWWTLLIAAIPALLCTILIFM. Residues 930-954 lie on the Cytoplasmic side of the membrane; it reads DQQITAVIINRKEHKLKKGAGYHLD. Residues 955 to 975 traverse the membrane as a helical segment; the sequence is LLMVGVMLGVCSVMGLPWFVA. The Extracellular segment spans residues 976 to 1011; sequence ATVLSISHVNSLKVESECSAPGEQPKFLGIREQRVT. Glutamate 1007, valine 1010, and phenylalanine 1016 each carry phosphoserine. 2 essential for cell membrane localization and transport activity regions span residues 1008 to 1131 and 1127 to 1214; these read QRVT…KREL and TKRE…ETSL. A helical transmembrane segment spans residues 1012–1032; it reads GLMIFILMGLSVFMTSVLKFI. Residues 1033–1034 lie on the Cytoplasmic side of the membrane; sequence PM. Residues 1035–1055 form a helical membrane-spanning segment; that stretch reads PVLYGVFLYMGVSSLKGIQLF. The Extracellular segment spans residues 1056–1092; it reads DRIKLFGMPAKHQPDLIYLRYVPLWKVHIFTVIQLTC. 8 positions are modified to phosphoserine: tyrosine 1073, valine 1077, serine 1102, alanine 1105, valine 1106, proline 1109, methionine 1111, and leucine 1115. A helical membrane pass occupies residues 1093–1113; sequence LVLLWVIKVSAAAVVFPMMVL. Over 1114–1214 the chain is Cytoplasmic; it reads ALVFVRKLMD…KKYVDAETSL (101 aa). The tract at residues 1134 to 1136 is CA2-binding; sequence LDD. Residues 1144 to 1162 are compositionally biased toward basic and acidic residues; the sequence is KKEDDKKKKEKEEAERMLQ. Residues 1144–1169 are disordered; the sequence is KKEDDKKKKEKEEAERMLQDDDDTVH. Threonine 1167 carries the post-translational modification Phosphothreonine. Phosphoserine occurs at positions 1176, 1188, 1201, and 1213. Positions 1211–1214 match the PDZ-binding motif; sequence ETSL.

It belongs to the anion exchanger (TC 2.A.31) family. Interacts with CFTR through NHERF1/EBP50. Interacts with USH1C. Forms a complex with ATP6V1B1 and NHERF1/EBP50. Interacts in a pH dependent-manner with CA2/carbonic anhydrase 2. Highly expressed in testis and spleen. Also expressed in retina, colon, small intestine, ovary, thymus, prostate, muscle, heart and kidney. In terms of tissue distribution, expressed in skeletal muscle and heart muscle.

The protein localises to the basolateral cell membrane. Its subcellular location is the apical cell membrane. It localises to the cell projection. The protein resides in the stereocilium. It is found in the cell membrane. The catalysed reaction is hydrogencarbonate(in) + Na(+)(in) = hydrogencarbonate(out) + Na(+)(out). Transporter activity is regulated by CA2/carbonic anhydrase 2, cAMP and PKA. Insensitive to stilbene derivatives. Inhibited by 5-(N-ethyl-N-isopropyl)-amiloride (EIPA). Functionally, electroneutral sodium- and bicarbonate-dependent cotransporter with a Na(+):HCO3(-) 1:1 stoichiometry. Mediates the sodium-dependent bicarbonate transport important for pH recovery after acid load as well as for regulation of steady-state pH in the duodenum and vascular smooth muscle cells. Plays a key role in macrophage acidification, mediating bicarbonate import into the cytoplasm which is crucial for net acid extrusion and maintenance of cytoplasmic pH during phagocytosis. Provides cellular bicarbonate for de novo purine and pyrimidine synthesis and is a key mediator of de novo nucleotide synthesis downstream of mTORC1 signaling in proliferating cells. In terms of biological role, plays a key role in macrophage acidification, mediating bicarbonate import into the cytoplasm which is crucial for net acid extrusion and maintenance of cytoplasmic pH during phagocytosis. The polypeptide is Sodium bicarbonate cotransporter 3 (SLC4A7) (Homo sapiens (Human)).